The primary structure comprises 263 residues: Oxygen-evolving enhancer protein 2, chloroplastic (263 aa).

A chloroplast-targeting transit peptide spans 1–78 (MAAASCFHAL…VGTKVSPADA (78 aa)). Residues 14-30 (ARSSSSSLQSSSSRLPA) show a composition bias toward low complexity. Positions 14-34 (ARSSSSSLQSSSSRLPAPIKP) are disordered.

This sequence belongs to the PsbP family.

It is found in the plastid. The protein resides in the chloroplast thylakoid membrane. Its function is as follows. May be involved in the regulation of photosystem II. In Helianthus annuus (Common sunflower), this protein is Oxygen-evolving enhancer protein 2, chloroplastic.